The chain runs to 149 residues: Small ribosomal subunit protein uS13 (149 aa).

This sequence belongs to the universal ribosomal protein uS13 family. Part of the 30S ribosomal subunit. Forms a loose heterodimer with protein S19. Forms two bridges to the 50S subunit in the 70S ribosome.

Located at the top of the head of the 30S subunit, it contacts several helices of the 16S rRNA. In the 70S ribosome it contacts the 23S rRNA (bridge B1a) and protein L5 of the 50S subunit (bridge B1b), connecting the 2 subunits; these bridges are implicated in subunit movement. The chain is Small ribosomal subunit protein uS13 from Thermococcus kodakarensis (strain ATCC BAA-918 / JCM 12380 / KOD1) (Pyrococcus kodakaraensis (strain KOD1)).